The chain runs to 317 residues: Acetyl-coenzyme A carboxylase carboxyl transferase subunit alpha (317 aa).

A CoA carboxyltransferase C-terminal domain is found at 39-293 (RLKKKSISLT…KTSLAQGVAE (255 aa)).

This sequence belongs to the AccA family. As to quaternary structure, acetyl-CoA carboxylase is a heterohexamer composed of biotin carboxyl carrier protein (AccB), biotin carboxylase (AccC) and two subunits each of ACCase subunit alpha (AccA) and ACCase subunit beta (AccD).

It is found in the cytoplasm. It carries out the reaction N(6)-carboxybiotinyl-L-lysyl-[protein] + acetyl-CoA = N(6)-biotinyl-L-lysyl-[protein] + malonyl-CoA. Its pathway is lipid metabolism; malonyl-CoA biosynthesis; malonyl-CoA from acetyl-CoA: step 1/1. In terms of biological role, component of the acetyl coenzyme A carboxylase (ACC) complex. First, biotin carboxylase catalyzes the carboxylation of biotin on its carrier protein (BCCP) and then the CO(2) group is transferred by the carboxyltransferase to acetyl-CoA to form malonyl-CoA. The protein is Acetyl-coenzyme A carboxylase carboxyl transferase subunit alpha of Marinobacter nauticus (strain ATCC 700491 / DSM 11845 / VT8) (Marinobacter aquaeolei).